Reading from the N-terminus, the 436-residue chain is UDP-glucuronate 4-epimerase 5 (436 aa).

The next 2 membrane-spanning stretches (helical) occupy residues 36–56 and 95–115; these read LTLW…LSPP and GLTV…SIAL. Position 97-128 (97-128) interacts with NAD(+); it reads TVLVTGASGFVGTHVSIALRRRGDGVLGLDNF. Y247 functions as the Proton acceptor in the catalytic mechanism.

Belongs to the NAD(P)-dependent epimerase/dehydratase family. Homodimer. In terms of tissue distribution, in leaves, pollen and siliques, but not in roots or flowers.

Its subcellular location is the golgi apparatus. It localises to the golgi stack membrane. The catalysed reaction is UDP-alpha-D-glucuronate = UDP-alpha-D-galacturonate. Functionally, involved in the synthesis of the negatively charged monosaccharide that forms the backbone of pectic cell wall components. The chain is UDP-glucuronate 4-epimerase 5 (GAE5) from Arabidopsis thaliana (Mouse-ear cress).